Reading from the N-terminus, the 798-residue chain is Transferrin receptor protein 2 (798 aa).

At 1-81 the chain is on the cytoplasmic side; the sequence is MEQRWGLLRK…WAAAGRKAAP (81 aa). The short motif at 23–26 is the Endocytosis signal element; it reads YRRV. A disordered region spans residues 25-44; it reads RVEGPQLENLEEEDREEGEE. Acidic residues predominate over residues 33–44; that stretch reads NLEEEDREEGEE. The helical; Signal-anchor for type II membrane protein transmembrane segment at 82–102 threads the bilayer; the sequence is YLVLTTLLIFTGAFLLGYVAF. Residues 103 to 798 are Extracellular-facing; it reads RGSCQACGDS…GDVWNIDNNF (696 aa). N235, N334, and N535 each carry an N-linked (GlcNAc...) asparagine glycan.

It belongs to the peptidase M28 family. M28B subfamily. Homodimer.

Its subcellular location is the cell membrane. Functionally, mediates cellular uptake of transferrin-bound iron in a non-iron dependent manner. May be involved in iron metabolism, hepatocyte function and erythrocyte differentiation. The polypeptide is Transferrin receptor protein 2 (Tfr2) (Rattus norvegicus (Rat)).